The primary structure comprises 551 residues: Arginine--tRNA ligase (551 aa).

The short motif at 124–134 (ANPTGPLHIGH) is the 'HIGH' region element.

This sequence belongs to the class-I aminoacyl-tRNA synthetase family. Monomer.

It localises to the cytoplasm. It catalyses the reaction tRNA(Arg) + L-arginine + ATP = L-arginyl-tRNA(Arg) + AMP + diphosphate. The sequence is that of Arginine--tRNA ligase from Solidesulfovibrio magneticus (strain ATCC 700980 / DSM 13731 / RS-1) (Desulfovibrio magneticus).